Here is a 263-residue protein sequence, read N- to C-terminus: N-glycosylase/DNA lyase (263 aa).

Residues Gln-43, Ser-71, and Trp-82 each coordinate 8-oxoguanine. The helix-hairpin-helix stretch occupies residues 139–204; it reads RRYYFENMMG…EDVRIKAYTE (66 aa). Lys-164 acts as the Schiff-base intermediate with DNA in catalysis. 2 residues coordinate 8-oxoguanine: Phe-168 and Pro-194. Residue Asp-196 is part of the active site. 2 residues coordinate 8-oxoguanine: Asp-230 and Trp-234.

The protein belongs to the archaeal N-glycosylase/DNA lyase (AGOG) family.

The catalysed reaction is 2'-deoxyribonucleotide-(2'-deoxyribose 5'-phosphate)-2'-deoxyribonucleotide-DNA = a 3'-end 2'-deoxyribonucleotide-(2,3-dehydro-2,3-deoxyribose 5'-phosphate)-DNA + a 5'-end 5'-phospho-2'-deoxyribonucleoside-DNA + H(+). DNA repair enzyme that is part of the base excision repair (BER) pathway; protects from oxidative damage by removing the major product of DNA oxidation, 8-oxoguanine (GO), from single- and double-stranded DNA substrates. The sequence is that of N-glycosylase/DNA lyase from Thermococcus kodakarensis (strain ATCC BAA-918 / JCM 12380 / KOD1) (Pyrococcus kodakaraensis (strain KOD1)).